Reading from the N-terminus, the 1862-residue chain is Chitin synthase V (1862 aa).

Residues 1–26 are disordered; it reads MAMSLPQLGGAGGPHTQPSLPSLPAH. Residues 1 to 778 form the Myosin motor domain; the sequence is MAMSLPQLGG…CWMEIAQLGE (778 aa). N-linked (GlcNAc...) asparagine glycosylation is present at N63. 104–111 provides a ligand contact to ATP; sequence GESGAGKS. N123, N429, N483, N522, and N560 each carry an N-linked (GlcNAc...) asparagine glycan. The interval 592 to 643 is disordered; it reads TVSSKPMRAPSVMSRKTHRTGRPSTAYKRQQQEAMEELDQQSQAGESKKNAK. The actin-binding stretch occupies residues 658–682; sequence LDNVQKAVTDPGTNSYFVFCLKPND. A run of 2 helical transmembrane segments spans residues 884 to 904 and 923 to 943; these read WVALVFFLTWFIPDFAIRLIG and MLIWLMCAVAAFFMVGFPMLI. Positions 947–1009 constitute a Cytochrome b5 heme-binding domain; it reads QYVYSSNELS…YAGKDISALF (63 aa). N-linked (GlcNAc...) asparagine glycosylation is found at N1036, N1063, and N1192. Residues 1202 to 1222 form a helical membrane-spanning segment; it reads FILAISVMLASILVFKFLAAL. N-linked (GlcNAc...) asparagine glycosylation is found at N1459 and N1565. 3 consecutive transmembrane segments (helical) span residues 1590–1610, 1623–1643, and 1650–1670; these read FVVFIDLLSTIVQPVIVMYIV, VPITAFLLLGAIYGLQAVIFI, and MVGWMIMYIAAIPVFSFGLPL. N1771 carries N-linked (GlcNAc...) asparagine glycosylation. In terms of domain architecture, DEK-C spans 1804-1859; that stretch reads MPSDDALLAEIRDILKTADLMTVTKKGIKQELERRFNVPLDAKRAYINSATEALLS.

This sequence in the N-terminal section; belongs to the TRAFAC class myosin-kinesin ATPase superfamily. Myosin family. The protein in the C-terminal section; belongs to the chitin synthase family. Class V subfamily.

The protein localises to the cell membrane. The catalysed reaction is [(1-&gt;4)-N-acetyl-beta-D-glucosaminyl](n) + UDP-N-acetyl-alpha-D-glucosamine = [(1-&gt;4)-N-acetyl-beta-D-glucosaminyl](n+1) + UDP + H(+). Polymerizes chitin, a structural polymer of the cell wall and septum, by transferring the sugar moiety of UDP-GlcNAc to the non-reducing end of the growing chitin polymer. ChsV and chsVb do perform additive, but not redundant, functions in septum formation. Involved in cell wall integrity and resistance to antimicrobial plant defense compounds such as the tomato phytoanticipin alpha-tomatine or H(2)O(2), and plays a crucial role in vascular colonization and pathogenicity. Also plays an important role in nuclear sorting or distribution. The sequence is that of Chitin synthase V from Fusarium oxysporum f. sp. lycopersici (strain 4287 / CBS 123668 / FGSC 9935 / NRRL 34936) (Fusarium vascular wilt of tomato).